A 135-amino-acid polypeptide reads, in one-letter code: ATP synthase epsilon chain (135 aa).

The protein belongs to the ATPase epsilon chain family. F-type ATPases have 2 components, CF(1) - the catalytic core - and CF(0) - the membrane proton channel. CF(1) has five subunits: alpha(3), beta(3), gamma(1), delta(1), epsilon(1). CF(0) has three main subunits: a, b and c.

It is found in the cellular thylakoid membrane. Its function is as follows. Produces ATP from ADP in the presence of a proton gradient across the membrane. This is ATP synthase epsilon chain from Prochlorococcus marinus (strain MIT 9211).